The following is a 327-amino-acid chain: GMP reductase (327 aa).

Cys176 (thioimidate intermediate) is an active-site residue. NADP(+) is bound at residue Ile205 to Val228.

This sequence belongs to the IMPDH/GMPR family. GuaC type 2 subfamily.

The enzyme catalyses IMP + NH4(+) + NADP(+) = GMP + NADPH + 2 H(+). In terms of biological role, catalyzes the irreversible NADPH-dependent deamination of GMP to IMP. It functions in the conversion of nucleobase, nucleoside and nucleotide derivatives of G to A nucleotides, and in maintaining the intracellular balance of A and G nucleotides. The chain is GMP reductase from Streptococcus pyogenes serotype M6 (strain ATCC BAA-946 / MGAS10394).